The chain runs to 172 residues: Protein-export protein SecB (172 aa).

It belongs to the SecB family. As to quaternary structure, homotetramer, a dimer of dimers. One homotetramer interacts with 1 SecA dimer.

It is found in the cytoplasm. One of the proteins required for the normal export of preproteins out of the cell cytoplasm. It is a molecular chaperone that binds to a subset of precursor proteins, maintaining them in a translocation-competent state. It also specifically binds to its receptor SecA. In Stenotrophomonas maltophilia (strain K279a), this protein is Protein-export protein SecB.